Consider the following 372-residue polypeptide: Pluviatolide O-methyltransferase (372 aa).

Positions 214, 237, 257, 258, and 271 each coordinate S-adenosyl-L-homocysteine. H275 (proton acceptor) is an active-site residue. Active-site residues include D306 and E338.

This sequence belongs to the class I-like SAM-binding methyltransferase superfamily. Cation-independent O-methyltransferase family. COMT subfamily. As to quaternary structure, homodimer. Mostly expressed in stems, and, to a lower extent, in leaves.

It carries out the reaction (-)-pluviatolide + S-adenosyl-L-methionine = (-)-bursehernin + S-adenosyl-L-homocysteine + H(+). It participates in aromatic compound metabolism; phenylpropanoid biosynthesis. Its function is as follows. O-methyltransferase involved in the biosynthesis of etoposide, a chemotherapeutic compound of the topoisomerase inhibitor family. Catalyzes the methylation of (-)-pluviatolide to produce (-)-bursehernin. The chain is Pluviatolide O-methyltransferase from Sinopodophyllum hexandrum (Himalayan may apple).